A 1033-amino-acid polypeptide reads, in one-letter code: Complement receptor type 2 (1033 aa).

The N-terminal stretch at 1–20 (MGAAGLLGVFLALVAPGVLG) is a signal peptide. Sushi domains are found at residues 21-84 (ISCG…KCEY), 89-148 (SSCP…TCVS), 152-212 (LECP…TCEE), 213-273 (ARCK…VCEE), 274-344 (IFCP…RCEL), 349-408 (VQCP…VCEK), 409-468 (ECQA…QCKV), 469-524 (AACE…LCKE), 525-595 (ITCP…LCKL), 600-659 (VQCS…VCEK), 660-716 (ETCQ…LCKV), 717-781 (IHCH…QCLR), 786-845 (TRCP…TCIK), 849-909 (IGCP…HCKE), and 910-970 (VNCS…VCRS). The Extracellular portion of the chain corresponds to 21–971 (ISCGSPPPIL…NPPLAVCRSR (951 aa)). Disulfide bonds link Cys-23–Cys-65, Cys-51–Cys-82, Cys-91–Cys-132, Cys-118–Cys-146, Cys-154–Cys-197, Cys-183–Cys-210, Cys-215–Cys-256, Cys-242–Cys-271, Cys-276–Cys-325, Cys-305–Cys-342, Cys-351–Cys-393, Cys-379–Cys-406, Cys-410–Cys-453, Cys-439–Cys-466, Cys-471–Cys-509, Cys-495–Cys-522, Cys-527–Cys-576, Cys-556–Cys-593, Cys-602–Cys-644, Cys-630–Cys-657, Cys-662–Cys-699, Cys-685–Cys-714, Cys-719–Cys-762, Cys-748–Cys-779, Cys-788–Cys-830, Cys-816–Cys-843, Cys-851–Cys-894, and Cys-880–Cys-907. Asn-121 and Asn-127 each carry an N-linked (GlcNAc...) asparagine glycan. Residue Asn-294 is glycosylated (N-linked (GlcNAc...) asparagine). Asn-372 is a glycosylation site (N-linked (GlcNAc...) asparagine). Asn-492 is a glycosylation site (N-linked (GlcNAc...) asparagine). Residue Asn-623 is glycosylated (N-linked (GlcNAc...) asparagine). Residue Asn-682 is glycosylated (N-linked (GlcNAc...) asparagine). Residues Asn-800, Asn-823, and Asn-861 are each glycosylated (N-linked (GlcNAc...) asparagine). A glycan (N-linked (GlcNAc...) asparagine) is linked at Asn-911. Intrachain disulfides connect Cys-912-Cys-955 and Cys-941-Cys-968. A helical membrane pass occupies residues 972 to 999 (SLAPVLCGIAAGLILLTFLIVITLYVIS). Residues 1000–1033 (KHRARNYYTDTSQKEAFHLEAREVYSVDPYNPAS) lie on the Cytoplasmic side of the membrane.

Belongs to the receptors of complement activation (RCA) family. As to quaternary structure, interacts (via Sushi domain 1 and 2) with C3. Interacts with CD19. Part of a complex composed of CD19, CR2/CD21, CD81 and IFITM1/CD225 in the membrane of mature B-cells. Interacts (via Sushi domain 1 and 2) with FCER2 (via the C-terminus). Interacts with CD23. Interacts with FCRL5. Interacts with CR1. Interacts with INFNA1. In terms of assembly, (Microbial infection) Interacts with Epstein-Barr virus gp350 protein. In terms of tissue distribution, mature B-lymphocytes, T-lymphocytes, pharyngeal epithelial cells, astrocytes and follicular dendritic cells of the spleen.

The protein localises to the cell membrane. In terms of biological role, serves as a receptor for various ligands including complement component CD3d, HNRNPU OR IFNA1. When C3d is bound to antigens, attaches to C3d on B-cell surface and thereby facilitates the recognition and uptake of antigens by B-cells. This interaction enhances B-cell activation and subsequent immune responses. Forms a complex with several partners on the surface of B-cells including CD19, FCRL5 and CD81, to form the B-cell coreceptor complex that plays a crucial role in B-cell activation and signaling. Also induces specific intracellular signaling separately from the BCR and CD19 by activating the tyrosine kinase SRC, which then phosphorylates nucleolin/NCL and triggers AKT and GSK3 kinase activities in a SYK/CD19-independent manner. Acts as a ligand for CD23 (FcepsilonRII), a low-affinity receptor for IgE, which is expressed on B-cells and other immune cells, and thus participates in the regulation of IgE production. Functionally, (Microbial infection) Acts as a receptor for Epstein-Barr virus. The chain is Complement receptor type 2 (CR2) from Homo sapiens (Human).